Consider the following 469-residue polypeptide: Origin recognition complex subunit 6 (469 aa).

Composition is skewed to low complexity over residues 218–234 (SSTL…TAPK) and 275–308 (ATPT…LSST). 4 disordered regions span residues 218 to 241 (SSTL…PIPS), 275 to 309 (ATPT…SSTN), 356 to 423 (ESPF…EGDL), and 436 to 469 (KEQQ…SFFK). Basic and acidic residues-rich tracts occupy residues 380-390 (SRDELEKESEL) and 409-423 (QKEK…EGDL). The span at 454–469 (TPVNATKQLTLDSFFK) shows a compositional bias: polar residues.

Belongs to the ORC6 family. ORC is composed of six subunits.

Its subcellular location is the nucleus. Its function is as follows. Component of the origin recognition complex (ORC) that binds origins of replication. DNA-binding is ATP-dependent, however specific DNA sequences that define origins of replication have not been identified so far. ORC is required to assemble the pre-replication complex necessary to initiate DNA replication. The protein is Origin recognition complex subunit 6 (orcF) of Dictyostelium discoideum (Social amoeba).